A 1315-amino-acid polypeptide reads, in one-letter code: MKLGQRNSVCILSSRERGAPGLASYRVLQQLVEEKTQRMKWQSQKVELPDSPRSTFLLAFSPDRSLMASTHVNHNIYITEVKSGKCVHSLVGHRRTPWCLTFHPIIPGLIASGCLDGEVRIWDLHGGSESWLTESNSAIASLAFHPTAQLLLIATNNEVHLWDWSRKEPFTVVKTASETERVRLVRFDPLGHYLLTAIVNPSNQPNDDDPEIPMDSVEMPHLRQRSFLQSQPARRTPILHNFLHILTSRNSVPQAGGAHSASTDGSSDSSGPYTLMCVQPLGMVCFCSRCSAARVPSPPDEDPSDSASLEAQAHTFSSARTEPLQMSRFSVESRAANRSSAFSSVYGGGSNMRNHSSSSGRRGVTGMAPVPHFRQHPPGREGGGRHPGADWTVSGLNGQSSSMTPQRTGASSVSLLSVLRQQETSFQSPVYTSASDRWGSTPGTSSSRHRPPEEEGQSSSSSIHSVLRCNLYRYFMDYEGTQDTVQPLDGSRQDQQTQEMLNNNMDPEQPGPSHYQSPYSGENPPHSHMNRCRVCHNLFTYNQGSRRWDRTGQPSSTERNTPWQPSSSAFHSVAPVSQSNEHLLEHRPIESTPNTPEPHVPFSQRTDTGQHEEQAVGLVFNQETGQLERVYRQSASSRSANISQGALNQEMPEDTPDNDYLRRLSPAAYYAQRMIQYLSRRDSVRQHSHRPPSRPRPLSSNPSSLSPSPVPNAESSEVDFEEFEENGSRYRTPRNARMSAPSLGRFVGTRRFLLPEFLPYAGIFHERGQPGLATHSSVNRVLAGAVIGDGQSAVASNIANTTYRLQWWDFTKFDLPEISNASVNVLVPNCKIYNDASCDISADGQLLAVFIPSSQRGFPDEGILAVYSLAPHNLGEMLYSKRFGPNAISVSLSPMGRYVMVGLASRRILLHQISDHMVAQVFRLQQPHAGETSMRRVFDVVYPMAPDQRRHVSINSARWLPDPGLGLAYGTNKGDLVICRPVDVHSDGSSTSEHSERMFTINNGGGVGPSSSRSGDRAGSSRTDRRSRRDIGLMNGVGLQPQPPAASVTSQGTQTQNQRLQHAETQTDRDLPDDPQQPSTSQGSQVTDATESLDFETLPEDSGSEVVPETPPHSRPQEDEGSDPSEPSTDSTGQAEYVSRIRRLMAEGGMTAVVQREQSTTMASMGSFGNNIIVSHRIHRGSQTGADAQNRTRLSPIPGPSSGAPESLAAASYSRVLTNTLGFRGDTAQGIDLTEQERLHTSFFTPEFSPLFSSAVDATGPSSSIGADSVLEGEDFHDFASLPPSLLSSSPSLSPVNNSNYSNSDSSYLGDEYGR.

3 WD repeats span residues Asp50–Ser89, Gly92–Leu132, and Glu134–Lys174. Disordered stretches follow at residues Arg294–Glu322, Phe342–Gly409, Phe426–Ile463, Asn502–His526, Ser545–Gln610, Val630–Tyr660, Arg681–Ala736, His985–Gln1134, Gly1181–Leu1208, and Leu1286–Arg1315. The segment covering Asn351–Gly360 has biased composition (polar residues). The segment covering Pro378–Gly388 has biased composition (basic and acidic residues). Polar residues-rich tracts occupy residues Ser394–Gly409 and Phe426–Ser435. 2 stretches are compositionally biased toward polar residues: residues Gly552 to Glu581 and Gln633 to Leu647. Residues Arg696 to Ser715 are compositionally biased toward low complexity. Residues Ser716–Glu725 are compositionally biased toward acidic residues. A compositionally biased stretch (low complexity) spans Pro1009 to Ser1021. A compositionally biased stretch (basic and acidic residues) spans Arg1022–Ile1031. A compositionally biased stretch (polar residues) spans Ser1047–Leu1060. 2 short sequence motifs (TQT motif) span residues Thr1053–Thr1055 and Thr1065–Thr1067. The segment covering Gln1061–Pro1072 has biased composition (basic and acidic residues). Polar residues predominate over residues Gln1076–Thr1090. A compositionally biased stretch (acidic residues) spans Glu1091–Gly1103. Polar residues-rich tracts occupy residues Ser1125 to Gln1134 and Gly1181 to Arg1193. Over residues Leu1286–Ser1307 the composition is skewed to low complexity.

This sequence belongs to the WD repeat AMBRA1 family. In terms of assembly, component of the DCX(AMBRA1) E3 ubiquitin ligase complex.

The protein resides in the endoplasmic reticulum. It is found in the cytoplasm. It localises to the cytoskeleton. The protein localises to the cytoplasmic vesicle. Its subcellular location is the autophagosome. The protein resides in the mitochondrion. It is found in the cytosol. It localises to the nucleus. The protein localises to the cell junction. Its subcellular location is the focal adhesion. It participates in protein modification; protein ubiquitination. In terms of biological role, substrate-recognition component of a DCX (DDB1-CUL4-X-box) E3 ubiquitin-protein ligase complex involved in cell cycle control and autophagy. The DCX(AMBRA1) complex specifically mediates the polyubiquitination of target proteins. Acts as an upstream master regulator of the transition from G1 to S cell phase: ambra1a specifically recognizes and binds phosphorylated cyclin-D (ccnd1, ccnd2 and ccnd3), leading to cyclin-D ubiquitination by the DCX(AMBRA1) complex and subsequent degradation. Acts as a regulator of Cul5-RING (CRL5) E3 ubiquitin-protein ligase complexes by mediating ubiquitination and degradation of Elongin-C (eloc) component of CRL5 complexes. Acts as a key regulator of autophagy by modulating the BECN1-PIK3C3 complex: controls protein turnover during neuronal development, and regulates normal cell survival and proliferation. In normal conditions, ambra1a is tethered to the cytoskeleton via interaction with dyneins light chains. Upon autophagy induction, ambra1a is released from the cytoskeletal docking site to induce autophagosome nucleation by mediating ubiquitination of proteins involved in autophagy. Also acts as an activator of mitophagy. Required for skeletal muscle development. In Danio rerio (Zebrafish), this protein is Activating molecule in BECN1-regulated autophagy protein 1A.